Consider the following 1829-residue polypeptide: Sodium channel protein type 4 subunit alpha A (1829 aa).

Residues 1-124 (MARLLPPTGT…RGAIKILIHS (124 aa)) lie on the Cytoplasmic side of the membrane. The interval 32–52 (STREELEGAEEEPQAPSSDLE) is disordered. Residues 106–421 (CISPFSIVRR…VVAMAYDEQN (316 aa)) form an I repeat. A helical transmembrane segment spans residues 125 to 143 (LFSMFIMITILSNCVFMTM). Over 144-150 (SNPPAWS) the chain is Extracellular. A helical transmembrane segment spans residues 151–171 (KTVEYVFTGIYTFEATVKVLS). At 172–185 (RGFCIGPFTFLRDP) the chain is on the cytoplasmic side. Residues 186–203 (WNWLDFMVISMAYVTEFV) traverse the membrane as a helical segment. Residues 204–209 (DLGNVS) are Extracellular-facing. The N-linked (GlcNAc...) asparagine glycan is linked to N207. A helical transmembrane segment spans residues 210–226 (ALRTFRVLRALKTITVI). The Cytoplasmic portion of the chain corresponds to 227–245 (PGLKTIVGALIQSVKKMID). A helical membrane pass occupies residues 246 to 265 (VMILTIFALAVFALIGLQLF). Residues 266–358 (MGNLRQKCIR…PNYGYTSYDN (93 aa)) lie on the Extracellular side of the membrane. C273 and C327 form a disulfide bridge. Residues N280, N293, and N329 are each glycosylated (N-linked (GlcNAc...) asparagine). A disulfide bridge links C336 with C342. The segment at residues 359–383 (FGWAFLALFRLMTQDFWENLFQLTL) is an intramembrane region (pore-forming). Over 384-390 (RAAGKTY) the chain is Extracellular. Residues 391 to 411 (MIFFVVVIFLGSFYLINLILA) form a helical membrane-spanning segment. At 412-582 (VVAMAYDEQN…KWVHFVVMDP (171 aa)) the chain is on the cytoplasmic side. Residues 446-467 (ETGSKASLASQKTQSRGSNRTG) are compositionally biased toward polar residues. A disordered region spans residues 446 to 468 (ETGSKASLASQKTQSRGSNRTGS). Residues 564–836 (CCAPWILFKK…QIAIGRITRG (273 aa)) form an II repeat. Residues 583–601 (FVDLGITICIVLNTLFMAM) traverse the membrane as a helical segment. The Extracellular portion of the chain corresponds to 602-612 (EHYPMSPHFEH). The helical transmembrane segment at 613–632 (VLSVGNLVFTGIFTAEMVFK) threads the bilayer. Residues 633–646 (LIAMDPYYYFQVGW) lie on the Cytoplasmic side of the membrane. The chain crosses the membrane as a helical span at residues 647-666 (NIFDSIIVTLSLVELGLANV). Topologically, residues 667–668 (QG) are extracellular. A helical membrane pass occupies residues 669 to 686 (LSVLRSFRLLRVFKLAKS). The Cytoplasmic segment spans residues 687 to 702 (WPTLNMLIKIIGNSVG). Residues 703–721 (ALGNLTLVLAIIVFIFAVV) form a helical membrane-spanning segment. Residues 722 to 750 (GMQLFGKSYKDCVCKISEDCELPRWHMND) are Extracellular-facing. A disulfide bridge links C735 with C741. An intramembrane region (pore-forming) is located at residues 751 to 771 (FFHSFLIVFRILCGEWIETMW). The Extracellular portion of the chain corresponds to 772–782 (DCMEVAGASMC). Cysteines 773 and 782 form a disulfide. Residues 783-801 (LIVFMMVMVIGNLVVLNLF) form a helical membrane-spanning segment. At 802 to 998 (LALLLSSFSG…TCFTIVEHDY (197 aa)) the chain is on the cytoplasmic side. The interval 901-957 (SDVEEDEDSESSDEEDAKATLNDGDSSVCSTVDYQPPEPEPEPEEVEEEEPEPEEPE) is disordered. The segment covering 902-916 (DVEEDEDSESSDEED) has biased composition (acidic residues). Polar residues predominate over residues 923–933 (DGDSSVCSTVD). Positions 939–957 (PEPEPEEVEEEEPEPEEPE) are enriched in acidic residues. Residues 979–1292 (WGKKWWNLRR…KKYYNAMKKL (314 aa)) form an III repeat. The chain crosses the membrane as a helical span at residues 999-1016 (FETFIIFMILLSSGALAF). Residues 1017–1029 (EDINIERRRVIKT) lie on the Extracellular side of the membrane. The helical transmembrane segment at 1030-1048 (ILEYADKVFTYIFIVEMLL) threads the bilayer. The Cytoplasmic segment spans residues 1049–1062 (KWVAYGFKTYFTNA). The helical transmembrane segment at 1063–1081 (WCWLDFLIVDVSLVSLTAN) threads the bilayer. Residues 1082–1089 (LMGYSELG) are Extracellular-facing. The helical transmembrane segment at 1090–1108 (AIKSLRTLRALRPLRALSR) threads the bilayer. Residues 1109-1125 (FEGMRVVVNALVGAIPS) are Cytoplasmic-facing. A helical transmembrane segment spans residues 1126-1145 (IFNVLLVCLIFWLIFSIMGV). The Extracellular segment spans residues 1146–1196 (NLFAGKFYHCINTTTEERIPMDVVNNKSDCMALMYTNEVRWVNVKVNYDNV). Cysteines 1155 and 1175 form a disulfide. N-linked (GlcNAc...) asparagine glycosylation is found at N1157 and N1171. An intramembrane region (pore-forming) is located at residues 1197–1218 (GLGYLSLLQIATFKGWMDIMYA). Over 1219–1235 (AVDSREVDEQPSYEINL) the chain is Extracellular. The helical transmembrane segment at 1236 to 1257 (YMYLYFVIFIIFGSFFTLNLFI) threads the bilayer. Residues 1258–1320 (GVIIDNFNQQ…LVFDFISKQF (63 aa)) are Cytoplasmic-facing. Residues 1276-1278 (IFM) form an important for rapid channel inactivation region. One copy of the IV repeat lies at 1301–1599 (IPRPSNIIQG…WEKFDVDATQ (299 aa)). Residues 1321–1338 (FDIFIMVLICLNMVTMMI) form a helical membrane-spanning segment. Residues 1339–1349 (ETDDQSAEKEY) are Extracellular-facing. Residues 1350 to 1368 (VLYQINLVFIVVFTSECVL) form a helical membrane-spanning segment. Topologically, residues 1369–1380 (KLFALRQYFFTI) are cytoplasmic. Residues 1381 to 1398 (GWNVFDFVVVILSIAGLM) traverse the membrane as a helical segment. Residues 1399-1411 (LSDIIEKYFVSPT) are Extracellular-facing. A helical transmembrane segment spans residues 1412–1428 (LFRVIRLARIGRVLRLI). The Cytoplasmic portion of the chain corresponds to 1429 to 1447 (RGAKGIRTLLFALMMSLPA). Residues 1448-1465 (LFNIGLLLFLIMFIFSIF) traverse the membrane as a helical segment. The Extracellular segment spans residues 1466–1487 (GMSNFAYVKKQAGIDDIFNFET). Residues 1488–1510 (FGGSIICLFEITTSAGWDGLLLP) constitute an intramembrane region (pore-forming). Residues 1511 to 1540 (ILNSGPPDCDPDFENPGTDVRGNCGNPGMG) are Extracellular-facing. C1519 and C1534 are disulfide-bonded. Residues 1541–1563 (IMFFCSYIIMSFLVVVNMYIAII) traverse the membrane as a helical segment. Over 1564 to 1829 (LENFNNAQEE…NATTIKESIV (266 aa)) the chain is Cytoplasmic. The IQ domain maps to 1693-1722 (EERAAIAVQRIYRRHLLKRAIRYACFMRRS). Residues 1765–1786 (PMRPNSQPPKPSQVTQTRASVT) form a disordered region.

Belongs to the sodium channel (TC 1.A.1.10) family. Nav1.4/SCN4A subfamily. Voltage-gated sodium (Nav) channels consist of an ion-conducting alpha subunit which is functional on its own associated with regulatory beta subunits. As to expression, expressed in skeletal muscle, brain, spinal cord, and eye.

The protein localises to the cell membrane. The catalysed reaction is Na(+)(in) = Na(+)(out). Its function is as follows. Pore-forming subunit of a voltage-gated sodium (Nav) channel that directly mediates the depolarizing phase of action potentials in excitable membranes. Navs, also called VGSCs (voltage-gated sodium channels) or VDSCs (voltage-dependent sodium channels), operate by switching between closed and open conformations depending on the voltage difference across the membrane. In the open conformation they allow Na(+) ions to selectively pass through the pore, along their electrochemical gradient. The influx of Na+ ions provokes membrane depolarization, initiating the propagation of electrical signals throughout cells and tissues. The polypeptide is Sodium channel protein type 4 subunit alpha A (scn4aa) (Danio rerio (Zebrafish)).